The sequence spans 137 residues: Small ribosomal subunit protein uS11 (137 aa).

The disordered stretch occupies residues 1-30; sequence MAQAKKGGAPKKGQKTRRREKKNVPHGAAH. The segment covering 8 to 21 has biased composition (basic residues); that stretch reads GAPKKGQKTRRREK.

Belongs to the universal ribosomal protein uS11 family. As to quaternary structure, part of the 30S ribosomal subunit. Interacts with proteins S7 and S18. Binds to IF-3.

Located on the platform of the 30S subunit, it bridges several disparate RNA helices of the 16S rRNA. Forms part of the Shine-Dalgarno cleft in the 70S ribosome. The protein is Small ribosomal subunit protein uS11 of Mycolicibacterium vanbaalenii (strain DSM 7251 / JCM 13017 / BCRC 16820 / KCTC 9966 / NRRL B-24157 / PYR-1) (Mycobacterium vanbaalenii).